The primary structure comprises 275 residues: Trans-aconitate 2-methyltransferase (275 aa).

The protein belongs to the methyltransferase superfamily. Tam family.

Its subcellular location is the cytoplasm. It catalyses the reaction trans-aconitate + S-adenosyl-L-methionine = (E)-3-(methoxycarbonyl)pent-2-enedioate + S-adenosyl-L-homocysteine. Its function is as follows. Catalyzes the S-adenosylmethionine monomethyl esterification of trans-aconitate. The protein is Trans-aconitate 2-methyltransferase of Pseudomonas aeruginosa (strain ATCC 15692 / DSM 22644 / CIP 104116 / JCM 14847 / LMG 12228 / 1C / PRS 101 / PAO1).